The sequence spans 952 residues: MKPEWKNNDFIRVKGARENNLKNINIDIPKNQFVVITGLSGSGKSSLAFNTIYAEGRRRYLESLSSYARQFLGNSDKPDVDLIEGLSPAISIDQKTTSHNPRSTMGTVTEIYDYLRLLWARIGTPYCPNGHGSIQTQTINQIANQIFDLPNKSKVQLLAPTVKNQRGIFTNEFIKYKQLGFLRVLVDGQIYTLDDEIKLDKNTKHNISVVIDRIIINKDNQTYSRIVDSIETIDRLTNGKIEVLKEDGTILNFSKNHGCDKCGFSISELEPRLFSFNSPLGSCSYCKGLGFSYEPDVDKIIADSKLSINQGAIDIFKNIVHGTSLDWQRFLSLVNHYKIPLDKPIEQLDKSQLNLILEGSDEPIEIKTISNSGAKNIRFEHYEGIANLIKRRHLETNSQVSREWYSAYMSEITCKKCHGKKLIKDALSVKLGGIDIISFTELSIDKSIDFLLKLELNDEQKKIGELALKEIINRLSFLKNVGLDYLNLARRASTLSGGEAQRIRLATQIGSQLTGVLYVMDEPSIGLHQKDNMRLIKTMMVMRDLGNTLLVVEHDSETMLAADYLIDIGPKAGNEGGELVACGTPLQVMENSNSITGQYLSGKKQISIPKNRHSGNGKTIIIKGAKVNNLKNINVTIPLNKLVLITGVSGSGKSSLINQTLVPALERILYRKGVKKDTYKEIIGANNIDKIIVVSQDPIGRTPRSNPATYISVFDDIRDLFANTKEAKARGYTNSRFSFNVPGGRCDKCFGDGVIRIEMHFLPDVYVKCEVCNGKKYNSQTLEIKYLGKSIFDVLQMSCKEAYEFFKAIPNISRKLRLLCDVGLEYLQLGINVTFLSGGEAQRIKLSKFLQKKSTGKTLFVLDEPSTGLHLEDINKLLTIIQRIIKNGDTVVVIEHNLDIIKVADYIIDLGPEGGDNGGQIVAQGTPEQLINQVNKSYTAQYLSKILKPDSI.

38 to 45 lines the ATP pocket; the sequence is GLSGSGKS. A C4-type zinc finger spans residues 259 to 286; the sequence is CDKCGFSISELEPRLFSFNSPLGSCSYC. ABC transporter domains are found at residues 316–595 and 615–944; these read FKNI…SNSI and GNGK…QYLS. Residue 647–654 participates in ATP binding; it reads GVSGSGKS. Residues 746-772 form a C4-type zinc finger; sequence CDKCFGDGVIRIEMHFLPDVYVKCEVC.

It belongs to the ABC transporter superfamily. UvrA family. Forms a heterotetramer with UvrB during the search for lesions.

The protein localises to the cytoplasm. Its function is as follows. The UvrABC repair system catalyzes the recognition and processing of DNA lesions. UvrA is an ATPase and a DNA-binding protein. A damage recognition complex composed of 2 UvrA and 2 UvrB subunits scans DNA for abnormalities. When the presence of a lesion has been verified by UvrB, the UvrA molecules dissociate. This Mycoplasma genitalium (strain ATCC 33530 / DSM 19775 / NCTC 10195 / G37) (Mycoplasmoides genitalium) protein is UvrABC system protein A.